The following is a 158-amino-acid chain: SsrA-binding protein (158 aa).

This sequence belongs to the SmpB family.

It localises to the cytoplasm. Its function is as follows. Required for rescue of stalled ribosomes mediated by trans-translation. Binds to transfer-messenger RNA (tmRNA), required for stable association of tmRNA with ribosomes. tmRNA and SmpB together mimic tRNA shape, replacing the anticodon stem-loop with SmpB. tmRNA is encoded by the ssrA gene; the 2 termini fold to resemble tRNA(Ala) and it encodes a 'tag peptide', a short internal open reading frame. During trans-translation Ala-aminoacylated tmRNA acts like a tRNA, entering the A-site of stalled ribosomes, displacing the stalled mRNA. The ribosome then switches to translate the ORF on the tmRNA; the nascent peptide is terminated with the 'tag peptide' encoded by the tmRNA and targeted for degradation. The ribosome is freed to recommence translation, which seems to be the essential function of trans-translation. This Pseudoalteromonas atlantica (strain T6c / ATCC BAA-1087) protein is SsrA-binding protein.